Consider the following 346-residue polypeptide: Sulfate/thiosulfate import ATP-binding protein CysA (346 aa).

Positions 3–237 (VRVANVRKEF…PNSPFVYGFI (235 aa)) constitute an ABC transporter domain. ATP is bound at residue 35 to 42 (GPSGSGKT).

It belongs to the ABC transporter superfamily. Sulfate/tungstate importer (TC 3.A.1.6) family. The complex is composed of two ATP-binding proteins (CysA), two transmembrane proteins (CysT and CysW) and a solute-binding protein (CysP).

It is found in the cell inner membrane. It carries out the reaction sulfate(out) + ATP + H2O = sulfate(in) + ADP + phosphate + H(+). The enzyme catalyses thiosulfate(out) + ATP + H2O = thiosulfate(in) + ADP + phosphate + H(+). Its function is as follows. Part of the ABC transporter complex CysAWTP involved in sulfate/thiosulfate import. Responsible for energy coupling to the transport system. This chain is Sulfate/thiosulfate import ATP-binding protein CysA, found in Mesorhizobium japonicum (strain LMG 29417 / CECT 9101 / MAFF 303099) (Mesorhizobium loti (strain MAFF 303099)).